An 894-amino-acid polypeptide reads, in one-letter code: Interleukin enhancer-binding factor 3 (894 aa).

The 374-residue stretch at 5–378 folds into the DZF domain; it reads RIFVNDDRHV…PMKRPMEEDG (374 aa). The disordered stretch occupies residues 50–86; that stretch reads DEQEKGSSEQAESDNMDVPPEDDSKEGAGEQKTEHMT. Acidic residues predominate over residues 60–73; it reads AESDNMDVPPEDDS. Serine 62 is subject to Phosphoserine. Positions 74-86 are enriched in basic and acidic residues; the sequence is KEGAGEQKTEHMT. N6-acetyllysine is present on lysine 100. Threonine 188 is subject to Phosphothreonine; by PKR. The residue at position 190 (serine 190) is a Phosphoserine. Lysine 297 participates in a covalent cross-link: Glycyl lysine isopeptide (Lys-Gly) (interchain with G-Cter in ubiquitin). Threonine 315 is modified (phosphothreonine; by PKR). Residue lysine 348 forms a Glycyl lysine isopeptide (Lys-Gly) (interchain with G-Cter in SUMO1) linkage. A disordered region spans residues 363–401; the sequence is TTYAITPMKRPMEEDGEEKSPSKKKKKIQKKEEKAEPPQ. A Bipartite nuclear localization signal motif is present at residues 371 to 389; that stretch reads KRPMEEDGEEKSPSKKKKK. Residues 372-383 are compositionally biased toward basic and acidic residues; it reads RPMEEDGEEKSP. Phosphoserine occurs at positions 382 and 384. Lysine 396 is covalently cross-linked (Glycyl lysine isopeptide (Lys-Gly) (interchain with G-Cter in SUMO2)). The DRBM 1 domain maps to 398-467; it reads EPPQAMNALM…AVKVLQDMGL (70 aa). Residue lysine 460 is modified to N6-acetyllysine. The segment at 466-524 is disordered; sequence GLPTGAEGRDSSKGEDSAEETEAKPAVVAPAPVVEAVSTPSAAFPSDATAEQGPILTKH. A compositionally biased stretch (basic and acidic residues) spans 472-481; that stretch reads EGRDSSKGED. A phosphoserine mark is found at serine 476, serine 477, and serine 482. Lysine 489 is covalently cross-linked (Glycyl lysine isopeptide (Lys-Gly) (interchain with G-Cter in SUMO2)). Positions 489–508 are enriched in low complexity; the sequence is KPAVVAPAPVVEAVSTPSAA. Residues 524–590 enclose the DRBM 2 domain; the sequence is HGKNPVMELN…ALAALEKLFP (67 aa). At threonine 592 the chain carries Phosphothreonine. Residues 609-894 are interaction with PRMT1; sequence RGGPKFAAKP…ADHSMNYQYR (286 aa). 2 disordered regions span residues 625-660 and 718-894; these read MGGP…FGGA and QGDN…YQYR. The span at 644–660 shows a compositional bias: gly residues; sequence RGGSIRGRGRGRGFGGA. Low complexity-rich tracts occupy residues 743-770 and 777-792; these read PSYG…YGPP and YNHG…SYNS. Phosphoserine occurs at positions 792, 810, 812, and 816. Gly residues-rich tracts occupy residues 811 to 825 and 832 to 851; these read GSGG…GSGG and SHGG…GKQG. Polar residues predominate over residues 857 to 866; that stretch reads NYNSPGSGQN. Residues 867 to 878 are compositionally biased toward low complexity; it reads YSGPPSSYQSSQ.

As to quaternary structure, identified in a IGF2BP1-dependent mRNP granule complex containing untranslated mRNAs. Interacts with FUS and SMN. Interacts (via C-terminus) with PRMT1. Forms a complex with ILF2. Can also bind to PRKDC/XRCC7: this may stabilize the interaction of PRKDC/XRCC7 and the heterodimeric complex of XRCC6/KU70 and XRCC5/KU80. Forms a heteromeric complex with ZNF346 and ILF3. Found in a nuclear export complex with XPO5, ILF3, Ran and double-stranded RNA or double-stranded minihelix VA1 RNA. Found in a nuclear export complex with XPO5, RAN, ILF3, ZNF346 and double-stranded RNA. Interacts with XPO5 and ZNF346. Forms a complex with ILF2, YLPM1, KHDRBS1, RBMX, NCOA5 and PPP1CA. Interacts with AGO1 and AGO2. Interacts with DHX36; this interaction occurs in a RNA-dependent manner. Interacts with ELAVL1; this interaction occurs in a RNA-dependent manner. Interacts with HAVCR2; this interaction promotes ILF3 ubiquitination and subsequent degradation. In terms of processing, phosphorylated at Thr-188 and Thr-315 by PKR in response to certain RNA viruses. This phosphorylation results in the dissociation of ILF2 from the ILF2-ILF3 complex resulting in a cytoplasmic sequestration of ILF3 where it can bind to viral RNAs and impede viral replication. Methylated by protein arginine N-methyltransferase 1. Post-translationally, ubiquitinated at Lys-297 in a TRIM47-dependent manner; this 'Lys-48'-linked ubiquitination promotes ILF3 degradation. Ubiquitous.

The protein resides in the nucleus. It is found in the nucleolus. It localises to the cytoplasm. RNA-binding protein that plays an essential role in the biogenesis of circular RNAs (circRNAs) which are produced by back-splicing circularization of pre-mRNAs. Within the nucleus, promotes circRNAs processing by stabilizing the regulatory elements residing in the flanking introns of the circularized exons. Plays thereby a role in the back-splicing of a subset of circRNAs. As a consequence, participates in a wide range of transcriptional and post-transcriptional processes. Binds to poly-U elements and AU-rich elements (AREs) in the 3'-UTR of target mRNAs. Upon viral infection, ILF3 accumulates in the cytoplasm and participates in the innate antiviral response. Mechanistically, ILF3 becomes phosphorylated and activated by the double-stranded RNA-activated protein kinase/PKR which releases ILF3 from cellular mature circRNAs. In turn, unbound ILF3 molecules are able to interact with and thus inhibit viral mRNAs. In terms of biological role, (Microbial infection) Plays a positive role in HIV-1 virus production by binding to and thereby stabilizing HIV-1 RNA, together with ILF3. This Homo sapiens (Human) protein is Interleukin enhancer-binding factor 3 (ILF3).